Reading from the N-terminus, the 292-residue chain is Probable 2-(5''-triphosphoribosyl)-3'-dephosphocoenzyme-A synthase (292 aa).

Belongs to the CitG/MdcB family.

It catalyses the reaction 3'-dephospho-CoA + ATP = 2'-(5''-triphospho-alpha-D-ribosyl)-3'-dephospho-CoA + adenine. This is Probable 2-(5''-triphosphoribosyl)-3'-dephosphocoenzyme-A synthase from Shigella flexneri.